The following is a 36-amino-acid chain: Photosystem I reaction center subunit VIII (36 aa).

A helical membrane pass occupies residues 6–28; the sequence is LPSIFVPXVGLVFPAIAMASXFL.

Belongs to the PsaI family.

Its subcellular location is the plastid. The protein resides in the chloroplast thylakoid membrane. May help in the organization of the PsaL subunit. This chain is Photosystem I reaction center subunit VIII, found in Acorus gramineus (Dwarf sweet flag).